The following is a 98-amino-acid chain: NADH-ubiquinone oxidoreductase chain 4L (98 aa).

3 helical membrane passes run 1-21 (MIPTYMNIMLAFTISLLGMLI), 29-49 (SLLCLEGMMMSLFIMTTLIAL), and 61-81 (IILLVFAACEAAVGLALLVSI).

Belongs to the complex I subunit 4L family. As to quaternary structure, core subunit of respiratory chain NADH dehydrogenase (Complex I) which is composed of 45 different subunits.

It is found in the mitochondrion inner membrane. It catalyses the reaction a ubiquinone + NADH + 5 H(+)(in) = a ubiquinol + NAD(+) + 4 H(+)(out). Functionally, core subunit of the mitochondrial membrane respiratory chain NADH dehydrogenase (Complex I) which catalyzes electron transfer from NADH through the respiratory chain, using ubiquinone as an electron acceptor. Part of the enzyme membrane arm which is embedded in the lipid bilayer and involved in proton translocation. The sequence is that of NADH-ubiquinone oxidoreductase chain 4L (MT-ND4L) from Macaca ochreata (Booted macaque).